We begin with the raw amino-acid sequence, 203 residues long: Small ribosomal subunit protein uS7 (203 aa).

Residues 1–22 are disordered; that stretch reads MSESEAPEPDQPAGAEEATGAK.

This sequence belongs to the universal ribosomal protein uS7 family. Part of the 30S ribosomal subunit.

In terms of biological role, one of the primary rRNA binding proteins, it binds directly to 16S rRNA where it nucleates assembly of the head domain of the 30S subunit. Is located at the subunit interface close to the decoding center. This Halococcus morrhuae (Micrococcus morrhuae) protein is Small ribosomal subunit protein uS7.